We begin with the raw amino-acid sequence, 444 residues long: P2X purinoceptor 5 (444 aa).

Residues 1 to 30 (MGQAGCKGLCLSLFDYKTEKYVIAKNKKVG) are Cytoplasmic-facing. A helical membrane pass occupies residues 31–51 (LLYRLLQASILAYLVVWVFLI). At 52–319 (KKGYQDVDTS…RTLMKAYGIR (268 aa)) the chain is on the extracellular side. Residue Asn-77 is glycosylated (N-linked (GlcNAc...) asparagine). Cystine bridges form between Cys-118–Cys-169, Cys-129–Cys-152, and Cys-135–Cys-163. N-linked (GlcNAc...) asparagine glycosylation is present at Asn-202. 2 disulfide bridges follow: Cys-220–Cys-229 and Cys-263–Cys-272. The helical transmembrane segment at 320–362 (FDVMVNGKAGKFSIIPTIINVGSGVALMGAGAFFCDLVLIYLI) threads the bilayer. At 363–444 (KKREFYRDKK…PQLLEPHRST (82 aa)) the chain is on the cytoplasmic side. The disordered stretch occupies residues 378–444 (GLEDSSQEAE…PQLLEPHRST (67 aa)).

It belongs to the P2X receptor family. Functional P2XRs are organized as homomeric and heteromeric trimers. Homotrimer. Forms heterotrimer with P2RX1. Expressed at high levels in brain and immune system.

The protein resides in the cell membrane. It carries out the reaction Na(+)(in) = Na(+)(out). It catalyses the reaction Ca(2+)(in) = Ca(2+)(out). The catalysed reaction is chloride(in) = chloride(out). Activated by ATP. Slowly desensitizing. Sensitive to the ATP agonist alpha/beta-methylene-ATP. In terms of biological role, ATP-gated nonselective transmembrane cation channel permeable to potassium, sodium and calcium. Unlike other P2RX receptors, the P2X5 receptor is also permeable to chloride. May play a supporting role in the inflammatory response. Its function is as follows. Non-functional. The polypeptide is P2X purinoceptor 5 (Homo sapiens (Human)).